Here is a 233-residue protein sequence, read N- to C-terminus: Antiholin-like protein LrgB (233 aa).

A run of 7 helical transmembrane segments spans residues 9–29 (TPYF…ILFE), 34–54 (FFLF…LYLT), 63–83 (IGGD…AIPL), 97–117 (IIGG…TFAK), 121–141 (FAND…IALP), 144–164 (AGIG…GVII), and 212–232 (IALV…VAIF).

It belongs to the CidB/LrgB family. LrgB subfamily.

Its subcellular location is the cell membrane. Inhibits the expression or activity of extracellular murein hydrolases by interacting, possibly with LrgA, with the holin-like proteins CidA and/or CidB. The LrgAB and CidAB proteins may affect the proton motive force of the membrane. May be involved in programmed cell death (PCD), possibly triggering PCD in response to antibiotics and environmental stresses. The chain is Antiholin-like protein LrgB from Staphylococcus aureus (strain Mu3 / ATCC 700698).